Here is a 374-residue protein sequence, read N- to C-terminus: Bifunctional enzyme IspD/IspF (374 aa).

A 2-C-methyl-D-erythritol 4-phosphate cytidylyltransferase region spans residues 1–213; that stretch reads MLDVTLIVLC…PCLKAPSNNF (213 aa). The segment at 214 to 374 is 2-C-methyl-D-erythritol 2,4-cyclodiphosphate synthase; that stretch reads FTGTGFDIHA…TLKYYNWKKR (161 aa). A divalent metal cation contacts are provided by aspartate 220 and histidine 222. 4-CDP-2-C-methyl-D-erythritol 2-phosphate-binding positions include 220 to 222 and 246 to 247; these read DIH and HS. A divalent metal cation is bound at residue histidine 254. Residues 268-270, 273-277, 344-347, phenylalanine 351, and arginine 354 each bind 4-CDP-2-C-methyl-D-erythritol 2-phosphate; these read DIG, FPDTD, and TTAE.

The protein in the N-terminal section; belongs to the IspD/TarI cytidylyltransferase family. IspD subfamily. It in the C-terminal section; belongs to the IspF family. The cofactor is a divalent metal cation.

The catalysed reaction is 2-C-methyl-D-erythritol 4-phosphate + CTP + H(+) = 4-CDP-2-C-methyl-D-erythritol + diphosphate. It carries out the reaction 4-CDP-2-C-methyl-D-erythritol 2-phosphate = 2-C-methyl-D-erythritol 2,4-cyclic diphosphate + CMP. The protein operates within isoprenoid biosynthesis; isopentenyl diphosphate biosynthesis via DXP pathway; isopentenyl diphosphate from 1-deoxy-D-xylulose 5-phosphate: step 2/6. Its pathway is isoprenoid biosynthesis; isopentenyl diphosphate biosynthesis via DXP pathway; isopentenyl diphosphate from 1-deoxy-D-xylulose 5-phosphate: step 4/6. Bifunctional enzyme that catalyzes the formation of 4-diphosphocytidyl-2-C-methyl-D-erythritol from CTP and 2-C-methyl-D-erythritol 4-phosphate (MEP) (IspD), and catalyzes the conversion of 4-diphosphocytidyl-2-C-methyl-D-erythritol 2-phosphate (CDP-ME2P) to 2-C-methyl-D-erythritol 2,4-cyclodiphosphate (ME-CPP) with a corresponding release of cytidine 5-monophosphate (CMP) (IspF). The protein is Bifunctional enzyme IspD/IspF of Aliarcobacter butzleri (strain RM4018) (Arcobacter butzleri).